The primary structure comprises 163 residues: Photosystem II extrinsic protein V (163 aa).

The signal sequence occupies residues 1-26 (MFRRLIGVVVATVLLSFQLLVGSATA). Cys-63, Cys-66, His-67, and His-118 together coordinate heme c.

This sequence belongs to the cytochrome c family. PsbV subfamily. In terms of assembly, PSII is composed of 1 copy each of membrane proteins PsbA, PsbB, PsbC, PsbD, PsbE, PsbF, PsbH, PsbI, PsbJ, PsbK, PsbL, PsbM, PsbT, PsbX, PsbY, PsbZ, Psb30/Ycf12, peripheral proteins PsbO, CyanoQ (PsbQ), PsbU, PsbV and a large number of cofactors. It forms dimeric complexes. The cofactor is heme c.

The protein localises to the cellular thylakoid membrane. Its function is as follows. One of the extrinsic, lumenal subunits of photosystem II (PSII). PSII is a light-driven water plastoquinone oxidoreductase, using light energy to abstract electrons from H(2)O, generating a proton gradient subsequently used for ATP formation. The extrinsic proteins stabilize the structure of photosystem II oxygen-evolving complex (OEC), the ion environment of oxygen evolution and protect the OEC against heat-induced inactivation. Low-potential cytochrome c that plays a role in the OEC of PSII. The polypeptide is Photosystem II extrinsic protein V (Nostoc punctiforme (strain ATCC 29133 / PCC 73102)).